A 356-amino-acid polypeptide reads, in one-letter code: UDP-N-acetylglucosamine--N-acetylmuramyl-(pentapeptide) pyrophosphoryl-undecaprenol N-acetylglucosamine transferase (356 aa).

UDP-N-acetyl-alpha-D-glucosamine is bound by residues 12-14 (TAG), Arg-166, Ser-196, and Gln-291.

Belongs to the glycosyltransferase 28 family. MurG subfamily.

It localises to the cell membrane. It catalyses the reaction di-trans,octa-cis-undecaprenyl diphospho-N-acetyl-alpha-D-muramoyl-L-alanyl-D-glutamyl-meso-2,6-diaminopimeloyl-D-alanyl-D-alanine + UDP-N-acetyl-alpha-D-glucosamine = di-trans,octa-cis-undecaprenyl diphospho-[N-acetyl-alpha-D-glucosaminyl-(1-&gt;4)]-N-acetyl-alpha-D-muramoyl-L-alanyl-D-glutamyl-meso-2,6-diaminopimeloyl-D-alanyl-D-alanine + UDP + H(+). Its pathway is cell wall biogenesis; peptidoglycan biosynthesis. Cell wall formation. Catalyzes the transfer of a GlcNAc subunit on undecaprenyl-pyrophosphoryl-MurNAc-pentapeptide (lipid intermediate I) to form undecaprenyl-pyrophosphoryl-MurNAc-(pentapeptide)GlcNAc (lipid intermediate II). This is UDP-N-acetylglucosamine--N-acetylmuramyl-(pentapeptide) pyrophosphoryl-undecaprenol N-acetylglucosamine transferase from Geobacillus thermodenitrificans (strain NG80-2).